The sequence spans 787 residues: Pyridoxal-dependent decarboxylase domain-containing protein 1 (787 aa).

The segment covering 26–44 (MLEKSPRRTEEENGKKPVS) has biased composition (basic and acidic residues). Positions 26-52 (MLEKSPRRTEEENGKKPVSEDIPGPLQ) are disordered. Ser652 is modified (phosphoserine). The disordered stretch occupies residues 682-787 (QGTGVTPPPT…SQVEELERLR (106 aa)). A phosphothreonine mark is found at Thr687 and Thr691. A phosphoserine mark is found at Ser710, Ser718, Ser722, and Ser748. The segment covering 725 to 748 (HIEDLEKVEQLSSGLEHDNLEAHS) has biased composition (basic and acidic residues). The span at 759 to 771 (TARQTEALQNQAQ) shows a compositional bias: polar residues. Residues 772-787 (HQEDDHSQVEELERLR) are compositionally biased toward basic and acidic residues. The residue at position 778 (Ser778) is a Phosphoserine.

Belongs to the group II decarboxylase family. Pyridoxal 5'-phosphate is required as a cofactor.

The polypeptide is Pyridoxal-dependent decarboxylase domain-containing protein 1 (Pdxdc1) (Mus musculus (Mouse)).